We begin with the raw amino-acid sequence, 311 residues long: Systemic RNA interference defective protein 2 (311 aa).

The signal sequence occupies residues 1–20 (MPRFVYFCFALIALLPISWT). Residues 21 to 188 (MDGILITDVE…EETKTVVNKN (168 aa)) are Extracellular-facing. The chain crosses the membrane as a helical span at residues 189–209 (GGAVAVAVIEGIALIAILAFL). Residues 210-311 (GYRTMVNHKL…NDPFATLESW (102 aa)) are Cytoplasmic-facing. Residues 287 to 301 (NSSAAQPSTTSNGQF) show a composition bias toward polar residues. The disordered stretch occupies residues 287 to 311 (NSSAAQPSTTSNGQFNDPFATLESW).

In terms of tissue distribution, expressed in the intestinal lumen. Also present, at lower levels, in the excretory duct cells.

It localises to the apical cell membrane. It is found in the cytoplasm. In terms of biological role, plays a role in RNA-mediated gene silencing by mediating endocytic uptake of double-stranded RNA (dsRNA) ingested from the environment into intestinal cells from the intestinal lumen. Selective for dsRNAs of at least 50 bp. Required for avoidance behavior induced by small RNAs derived from pathogenic bacteria such as P.aeruginosa. The chain is Systemic RNA interference defective protein 2 from Caenorhabditis elegans.